We begin with the raw amino-acid sequence, 413 residues long: Chloramphenicol efflux pump Rv0191 (413 aa).

A run of 12 helical transmembrane segments spans residues 23 to 43 (LSVLACAAFIYVTAEILPVGA), 55 to 75 (VVLVGTLLSWYALVAAVTTVP), 89 to 109 (LVVSLVCLTVSQLVSALAPNF), 110 to 130 (AVLAAGRVLCAVTHGLLWAVI), 150 to 170 (IYIGTSLALVVGSPLTAAMSL), 176 to 196 (LAAVCVTGAAAAVALAARLAL), 226 to 246 (VLTMIAVTGHFVSYTYIVVII), 256 to 276 (NLAWLLAAYGVAGLVSVPLVA), 286 to 306 (AVIVGMTGLTAAFTLLTALAF), 312 to 332 (AATALLGTGAIVLWGALATAV), 353 to 373 (GLYVTAFQIGIMAGALLGGLL), and 378 to 398 (LAMMLTASAGLMGVALFGMTV).

Belongs to the major facilitator superfamily.

The protein resides in the cell membrane. Its activity is regulated as follows. Inhibited by the drug efflux pump inhibitors verapamil, resperine, piperine, chlorpromazine and carbonyl cyanide m-chlorophenylhydrazone (CCCP). In terms of biological role, active efflux pump that plays an important role in chloramphenicol resistance. Overexpression causes pyrazinamide resistance. This Mycobacterium tuberculosis (strain ATCC 25618 / H37Rv) protein is Chloramphenicol efflux pump Rv0191.